We begin with the raw amino-acid sequence, 95 residues long: Large ribosomal subunit protein uL23 (95 aa).

The protein belongs to the universal ribosomal protein uL23 family. As to quaternary structure, part of the 50S ribosomal subunit. Contacts protein L29, and trigger factor when it is bound to the ribosome.

In terms of biological role, one of the early assembly proteins it binds 23S rRNA. One of the proteins that surrounds the polypeptide exit tunnel on the outside of the ribosome. Forms the main docking site for trigger factor binding to the ribosome. This chain is Large ribosomal subunit protein uL23, found in Lawsonia intracellularis (strain PHE/MN1-00).